Reading from the N-terminus, the 189-residue chain is Chitin synthase 2 (189 aa).

Belongs to the chitin synthase family. Class II subfamily.

It is found in the cell membrane. It carries out the reaction [(1-&gt;4)-N-acetyl-beta-D-glucosaminyl](n) + UDP-N-acetyl-alpha-D-glucosamine = [(1-&gt;4)-N-acetyl-beta-D-glucosaminyl](n+1) + UDP + H(+). In terms of biological role, polymerizes chitin, a structural polymer of the cell wall and septum, by transferring the sugar moiety of UDP-GlcNAc to the non-reducing end of the growing chitin polymer. This is Chitin synthase 2 (CHS2) from Ajellomyces dermatitidis (Blastomyces dermatitidis).